The chain runs to 609 residues: UvrABC system protein C (609 aa).

One can recognise a GIY-YIG domain in the interval 16–94 (SSAGVYRMYD…IKQYMPKYNV (79 aa)). Positions 203 to 238 (QQVISALVDKMELAAERQAYEQAARFRDQIMALRKV) constitute a UVR domain.

The protein belongs to the UvrC family. Interacts with UvrB in an incision complex.

The protein resides in the cytoplasm. The UvrABC repair system catalyzes the recognition and processing of DNA lesions. UvrC both incises the 5' and 3' sides of the lesion. The N-terminal half is responsible for the 3' incision and the C-terminal half is responsible for the 5' incision. This Shewanella baltica (strain OS155 / ATCC BAA-1091) protein is UvrABC system protein C.